A 602-amino-acid polypeptide reads, in one-letter code: Elongation factor 4 (602 aa).

Residues 7 to 189 enclose the tr-type G domain; it reads KRVRNFSIIA…AVVEKVPYPK (183 aa). Residues 19–24 and 136–139 each bind GTP; these read DHGKST and NKID.

It belongs to the TRAFAC class translation factor GTPase superfamily. Classic translation factor GTPase family. LepA subfamily.

It localises to the cell membrane. The catalysed reaction is GTP + H2O = GDP + phosphate + H(+). In terms of biological role, required for accurate and efficient protein synthesis under certain stress conditions. May act as a fidelity factor of the translation reaction, by catalyzing a one-codon backward translocation of tRNAs on improperly translocated ribosomes. Back-translocation proceeds from a post-translocation (POST) complex to a pre-translocation (PRE) complex, thus giving elongation factor G a second chance to translocate the tRNAs correctly. Binds to ribosomes in a GTP-dependent manner. This Clostridium tetani (strain Massachusetts / E88) protein is Elongation factor 4.